The chain runs to 550 residues: Natural resistance-associated macrophage protein 1 (550 aa).

The interval 1-45 (MTGDKGPQRLSGSSYGSISSPTSPTSPGPQQAPPRETYLSEKIPI) is disordered. Topologically, residues 1 to 58 (MTGDKGPQRLSGSSYGSISSPTSPTSPGPQQAPPRETYLSEKIPIPDTKPGTFSLRKL) are cytoplasmic. Over residues 11–23 (SGSSYGSISSPTS) the composition is skewed to low complexity. A helical transmembrane segment spans residues 59–76 (WAFTGPGFLMSIAFLDPG). Residues 77–85 (NIESDLQAG) lie on the Extracellular side of the membrane. The chain crosses the membrane as a helical span at residues 86–105 (AVAGFKLLWVLLWATVLGLL). The Cytoplasmic segment spans residues 106-142 (CQRLAARLGVVTGKDLGEVCHLYYPKVPRTVLWLTIE). Residues 143–163 (LAIVGSDMQEVIGTAIAFNLL) traverse the membrane as a helical segment. Over 164 to 167 (SAGR) the chain is Extracellular. The chain crosses the membrane as a helical span at residues 168–187 (IPLWGGVLITIVDTFFFLFL). The Cytoplasmic portion of the chain corresponds to 188–196 (DNYGLRKLE). Residues 197-217 (AFFGLLITIMALTFGYEYVVA) form a helical membrane-spanning segment. Residues 218–240 (RPEQGALLRGLFLPSCPGCGHPE) are Extracellular-facing. The chain crosses the membrane as a helical span at residues 241–259 (LLQAVGIVGAIIMPHNIYL). Residues 260-287 (HSALVKSREIDRARRADIREANMYFLIE) are Cytoplasmic-facing. The helical transmembrane segment at 288-307 (ATIALSVSFIINLFVMAVFG) threads the bilayer. Residues 308–349 (QAFYQKTNQAAFNICANSSLHDYAKIFPMNNATVAVDIYQGG) are Extracellular-facing. N-linked (GlcNAc...) asparagine glycosylation is found at Asn324 and Asn338. The helical transmembrane segment at 350 to 369 (VILGCLFGPAALYIWAIGLL) threads the bilayer. The Cytoplasmic segment spans residues 370–400 (AAGQSSTMTGTYAGQFVMEGFLRLRWSRFAR). Residues 401-418 (VLLTRSCAILPTVLVAVF) traverse the membrane as a helical segment. Topologically, residues 419-429 (RDLRDLSGLND) are extracellular. Residues 430–450 (LLNVLQSLLLPFAVLPILTFT) form a helical membrane-spanning segment. The Cytoplasmic portion of the chain corresponds to 451 to 466 (SMPTLMQEFANGLLNK). Residues 467 to 488 (VVTSSIMVLVCAINLYFVVSYL) form a helical membrane-spanning segment. The Extracellular portion of the chain corresponds to 489–496 (PSLPHPAY). A helical transmembrane segment spans residues 497 to 516 (FGLAALLAAAYLGLSTYLVW). Residues 517–550 (TCCLAHGATFLAHSSHHHFLYGLLEEDQKGETSG) lie on the Cytoplasmic side of the membrane.

The protein belongs to the NRAMP family. As to expression, macrophages; peripheral blood leukocytes, lung, spleen and liver.

The protein resides in the late endosome membrane. Its subcellular location is the lysosome membrane. The catalysed reaction is Zn(2+)(in) + H(+)(out) = Zn(2+)(out) + H(+)(in). It carries out the reaction Fe(2+)(in) + H(+)(out) = Fe(2+)(out) + H(+)(in). It catalyses the reaction Mn(2+)(in) + H(+)(out) = Mn(2+)(out) + H(+)(in). Macrophage-specific antiporter that fluxes metal ions in either direction against a proton gradient. Localized to late endosomal lysosomal membranes, delivers bivalent cations from the cytosol into these acidic compartments where they may directly affect antimicrobial activity. Involved in iron metabolism and host natural resistance to infection with intracellular parasites. Pathogen resistance involves sequestration of Fe(2+) and Mn(2+), cofactors of both prokaryotic and eukaryotic catalases and superoxide dismutases, not only to protect the macrophage against its own generation of reactive oxygen species, but to deny the cations to the pathogen for synthesis of its protective enzymes. The polypeptide is Natural resistance-associated macrophage protein 1 (Homo sapiens (Human)).